The chain runs to 63 residues: Cecropin-2 (63 aa).

The first 23 residues, 1-23 (MNFYKVFIFVALILAISLGQSEA), serve as a signal peptide directing secretion. The residue at position 62 (Arg-62) is an Arginine amide.

Belongs to the cecropin family.

It localises to the secreted. Its function is as follows. Cecropins have lytic and antibacterial activity against several Gram-positive and Gram-negative bacteria. This chain is Cecropin-2 (Cec2A), found in Drosophila virilis (Fruit fly).